We begin with the raw amino-acid sequence, 1589 residues long: Cell division control protein 25 (1589 aa).

Polar residues predominate over residues Met-1 to Ala-14. 4 disordered regions span residues Met-1 to Glu-53, Asn-121 to Asn-243, Ala-359 to Ala-424, and Thr-553 to Gly-574. A compositionally biased stretch (low complexity) spans Ala-20–Glu-53. Residues Arg-58–Asp-128 form the SH3 domain. Positions His-130–Lys-139 are enriched in basic residues. Low complexity predominate over residues Ser-143–Ser-158. Phosphoserine occurs at positions 151 and 154. Composition is skewed to polar residues over residues Gly-173 to Ser-205 and Ser-211 to Ser-238. Basic and acidic residues predominate over residues Ala-359–Gln-375. The span at Gly-415–Ala-424 shows a compositional bias: polar residues. Ser-423 bears the Phosphoserine mark. 3 positions are modified to phosphoserine: Ser-580, Ser-596, and Ser-632. Thr-635 carries the post-translational modification Phosphothreonine. Position 649 is a phosphoserine (Ser-649). One can recognise an N-terminal Ras-GEF domain in the interval Ser-1117 to Ile-1247. Residues Glu-1249–Gln-1259 show a composition bias toward basic and acidic residues. The interval Glu-1249 to Ser-1287 is disordered. Residues Gln-1260–Thr-1269 show a composition bias toward polar residues. One can recognise a Ras-GEF domain in the interval Asp-1305 to Arg-1542. Residues Asp-1452–Asn-1473 form a helical membrane-spanning segment. Residues Asp-1570–Arg-1589 form a disordered region. The span at Leu-1578–Arg-1589 shows a compositional bias: basic residues.

The protein resides in the membrane. Its function is as follows. Promotes the exchange of Ras-bound GDP by GTP. This protein positively controls the level of cellular cAMP at start, the stage at which the yeast cell division cycle is triggered. The sequence is that of Cell division control protein 25 (CDC25) from Saccharomyces cerevisiae (strain ATCC 204508 / S288c) (Baker's yeast).